A 255-amino-acid chain; its full sequence is Ribonuclease HII (255 aa).

One can recognise an RNase H type-2 domain in the interval 72 to 255; it reads NYIAGVDEAG…RLSFVKNFVE (184 aa). A divalent metal cation is bound by residues Asp-78, Glu-79, and Asp-170.

This sequence belongs to the RNase HII family. It depends on Mn(2+) as a cofactor. The cofactor is Mg(2+).

It is found in the cytoplasm. It carries out the reaction Endonucleolytic cleavage to 5'-phosphomonoester.. Its function is as follows. Endonuclease that specifically degrades the RNA of RNA-DNA hybrids. The protein is Ribonuclease HII of Ruminiclostridium cellulolyticum (strain ATCC 35319 / DSM 5812 / JCM 6584 / H10) (Clostridium cellulolyticum).